Here is a 297-residue protein sequence, read N- to C-terminus: Lipoyl synthase (297 aa).

Residues cysteine 37, cysteine 42, cysteine 48, cysteine 63, cysteine 67, cysteine 70, and serine 276 each contribute to the [4Fe-4S] cluster site. Residues 49 to 265 (WSRKHATVMI…ERIAKTKGFL (217 aa)) form the Radical SAM core domain.

This sequence belongs to the radical SAM superfamily. Lipoyl synthase family. It depends on [4Fe-4S] cluster as a cofactor.

It localises to the cytoplasm. The enzyme catalyses [[Fe-S] cluster scaffold protein carrying a second [4Fe-4S](2+) cluster] + N(6)-octanoyl-L-lysyl-[protein] + 2 oxidized [2Fe-2S]-[ferredoxin] + 2 S-adenosyl-L-methionine + 4 H(+) = [[Fe-S] cluster scaffold protein] + N(6)-[(R)-dihydrolipoyl]-L-lysyl-[protein] + 4 Fe(3+) + 2 hydrogen sulfide + 2 5'-deoxyadenosine + 2 L-methionine + 2 reduced [2Fe-2S]-[ferredoxin]. It functions in the pathway protein modification; protein lipoylation via endogenous pathway; protein N(6)-(lipoyl)lysine from octanoyl-[acyl-carrier-protein]: step 2/2. Catalyzes the radical-mediated insertion of two sulfur atoms into the C-6 and C-8 positions of the octanoyl moiety bound to the lipoyl domains of lipoate-dependent enzymes, thereby converting the octanoylated domains into lipoylated derivatives. In Rickettsia typhi (strain ATCC VR-144 / Wilmington), this protein is Lipoyl synthase.